We begin with the raw amino-acid sequence, 99 residues long: Aspartyl/glutamyl-tRNA(Asn/Gln) amidotransferase subunit C (99 aa).

This sequence belongs to the GatC family. As to quaternary structure, heterotrimer of A, B and C subunits.

The catalysed reaction is L-glutamyl-tRNA(Gln) + L-glutamine + ATP + H2O = L-glutaminyl-tRNA(Gln) + L-glutamate + ADP + phosphate + H(+). It catalyses the reaction L-aspartyl-tRNA(Asn) + L-glutamine + ATP + H2O = L-asparaginyl-tRNA(Asn) + L-glutamate + ADP + phosphate + 2 H(+). In terms of biological role, allows the formation of correctly charged Asn-tRNA(Asn) or Gln-tRNA(Gln) through the transamidation of misacylated Asp-tRNA(Asn) or Glu-tRNA(Gln) in organisms which lack either or both of asparaginyl-tRNA or glutaminyl-tRNA synthetases. The reaction takes place in the presence of glutamine and ATP through an activated phospho-Asp-tRNA(Asn) or phospho-Glu-tRNA(Gln). This Rhodococcus opacus (strain B4) protein is Aspartyl/glutamyl-tRNA(Asn/Gln) amidotransferase subunit C.